A 1023-amino-acid chain; its full sequence is 2-oxoglutarate dehydrogenase complex component E1 (1023 aa).

The N-terminal 40 residues, 1–40, are a transit peptide targeting the mitochondrion; it reads MFHLRTCAAKLRPLTASQTVKTFSQNRPAAARTFQQIRCY. At lysine 74 the chain carries N6-succinyllysine. At serine 100 the chain carries Phosphoserine. The Ca(2+) site is built by histidine 143, aspartate 156, and aspartate 158. A thiamine diphosphate-binding site is contributed by arginine 312. Lysine 401 is subject to N6-acetyllysine. Thiamine diphosphate-binding residues include aspartate 411, asparagine 444, and isoleucine 446. The Mg(2+) site is built by aspartate 411, asparagine 444, and isoleucine 446. Lysine 534 is covalently cross-linked (Glycyl lysine isopeptide (Lys-Gly) (interchain with G-Cter in ubiquitin)). The residue at position 564 (lysine 564) is an N6-succinyllysine. Thiamine diphosphate is bound at residue glutamine 676. Lysine 970 is subject to N6-acetyllysine.

The protein belongs to the alpha-ketoglutarate dehydrogenase family. Homodimer. The 2-oxoglutarate dehydrogenase complex is composed of OGDH (2-oxoglutarate dehydrogenase; E1), DLST (dihydrolipoamide succinyltransferase; E2), DLD (dihydrolipoamide dehydrogenase; E3), and the assembly factor KGD4. It contains multiple copies of the three enzymatic components (E1, E2 and E3). In the nucleus, the 2-oxoglutarate dehydrogenase complex associates with KAT2A. Interacts with ABHD11; this interaction maintains the functional lipoylation of the 2-oxoglutarate dehydrogenase complex. Requires thiamine diphosphate as cofactor. Mg(2+) serves as cofactor.

The protein resides in the mitochondrion. It is found in the nucleus. The enzyme catalyses N(6)-[(R)-lipoyl]-L-lysyl-[protein] + 2-oxoglutarate + H(+) = N(6)-[(R)-S(8)-succinyldihydrolipoyl]-L-lysyl-[protein] + CO2. With respect to regulation, calcium ions and ADP stimulate, whereas ATP and NADH reduce catalytic activity. Its function is as follows. 2-oxoglutarate dehydrogenase (E1o) component of the 2-oxoglutarate dehydrogenase complex (OGDHC). Participates in the first step, rate limiting for the overall conversion of 2-oxoglutarate to succinyl-CoA and CO(2) catalyzed by the whole OGDHC. Catalyzes the irreversible decarboxylation of 2-oxoglutarate (alpha-ketoglutarate) via the thiamine diphosphate (ThDP) cofactor and subsequent transfer of the decarboxylated acyl intermediate on an oxidized dihydrolipoyl group that is covalently amidated to the E2 enzyme (dihydrolipoyllysine-residue succinyltransferase or DLST). Plays a key role in the Krebs (citric acid) cycle, which is a common pathway for oxidation of fuel molecules, including carbohydrates, fatty acids, and amino acids. Can catalyze the decarboxylation of 2-oxoadipate in vitro, but at a much lower rate than 2-oxoglutarate. Mainly active in the mitochondrion. A fraction of the 2-oxoglutarate dehydrogenase complex also localizes in the nucleus and is required for lysine succinylation of histones: associates with KAT2A on chromatin and provides succinyl-CoA to histone succinyltransferase KAT2A. The polypeptide is 2-oxoglutarate dehydrogenase complex component E1 (Homo sapiens (Human)).